The chain runs to 214 residues: Pyridoxine/pyridoxamine 5'-phosphate oxidase (214 aa).

Residues arginine 8–tyrosine 11 and lysine 66 contribute to the substrate site. FMN-binding positions include arginine 61–lysine 66, phenylalanine 76–threonine 77, arginine 82, lysine 83, and glutamine 105. 3 residues coordinate substrate: tyrosine 123, arginine 127, and serine 131. FMN contacts are provided by residues glutamine 140 to serine 141 and tryptophan 184. Arginine 190 to histidine 192 is a substrate binding site. Arginine 194 contacts FMN.

Belongs to the pyridoxamine 5'-phosphate oxidase family. In terms of assembly, homodimer. It depends on FMN as a cofactor.

It carries out the reaction pyridoxamine 5'-phosphate + O2 + H2O = pyridoxal 5'-phosphate + H2O2 + NH4(+). It catalyses the reaction pyridoxine 5'-phosphate + O2 = pyridoxal 5'-phosphate + H2O2. Its pathway is cofactor metabolism; pyridoxal 5'-phosphate salvage; pyridoxal 5'-phosphate from pyridoxamine 5'-phosphate: step 1/1. It participates in cofactor metabolism; pyridoxal 5'-phosphate salvage; pyridoxal 5'-phosphate from pyridoxine 5'-phosphate: step 1/1. In terms of biological role, catalyzes the oxidation of either pyridoxine 5'-phosphate (PNP) or pyridoxamine 5'-phosphate (PMP) into pyridoxal 5'-phosphate (PLP). In Burkholderia multivorans (strain ATCC 17616 / 249), this protein is Pyridoxine/pyridoxamine 5'-phosphate oxidase.